The sequence spans 811 residues: Lon protease 1 (811 aa).

In terms of domain architecture, Lon N-terminal spans 15–212 (LPVLSLRDTV…SLALHLYRQI (198 aa)). Residue 376-383 (GPPGTGKT) participates in ATP binding. The region spanning 613–794 (YDQPGVATGM…DEALARCLRL (182 aa)) is the Lon proteolytic domain. Catalysis depends on residues Ser700 and Lys743.

It belongs to the peptidase S16 family. As to quaternary structure, homohexamer. Organized in a ring with a central cavity.

It localises to the cytoplasm. It carries out the reaction Hydrolysis of proteins in presence of ATP.. Its function is as follows. ATP-dependent serine protease that mediates the selective degradation of mutant and abnormal proteins as well as certain short-lived regulatory proteins. Required for cellular homeostasis and for survival from DNA damage and developmental changes induced by stress. Degrades polypeptides processively to yield small peptide fragments that are 5 to 10 amino acids long. Binds to DNA in a double-stranded, site-specific manner. The polypeptide is Lon protease 1 (Sorangium cellulosum (strain So ce56) (Polyangium cellulosum (strain So ce56))).